A 180-amino-acid chain; its full sequence is Large ribosomal subunit protein uL6 (180 aa).

The protein belongs to the universal ribosomal protein uL6 family. Part of the 50S ribosomal subunit.

In terms of biological role, this protein binds to the 23S rRNA, and is important in its secondary structure. It is located near the subunit interface in the base of the L7/L12 stalk, and near the tRNA binding site of the peptidyltransferase center. This Borreliella afzelii (strain PKo) (Borrelia afzelii) protein is Large ribosomal subunit protein uL6.